The chain runs to 218 residues: GTP cyclohydrolase 1 (218 aa).

Residues cysteine 109, histidine 112, and cysteine 180 each contribute to the Zn(2+) site.

This sequence belongs to the GTP cyclohydrolase I family. In terms of assembly, toroid-shaped homodecamer, composed of two pentamers of five dimers.

The enzyme catalyses GTP + H2O = 7,8-dihydroneopterin 3'-triphosphate + formate + H(+). The protein operates within cofactor biosynthesis; 7,8-dihydroneopterin triphosphate biosynthesis; 7,8-dihydroneopterin triphosphate from GTP: step 1/1. The protein is GTP cyclohydrolase 1 of Actinobacillus pleuropneumoniae serotype 5b (strain L20).